A 140-amino-acid chain; its full sequence is uncharacterized protein (140 aa).

This is an uncharacterized protein from Synechococcus sp. (strain WH8020).